Consider the following 158-residue polypeptide: Dysbindin domain-containing protein 1 (158 aa).

Disordered regions lie at residues 1 to 50 (MEPP…VPAP) and 93 to 158 (ADSD…PQED). Phosphoserine is present on residues serine 95 and serine 119. Over residues 125 to 141 (TRAEQSHEKQPLGDPER) the composition is skewed to basic and acidic residues.

This sequence belongs to the dysbindin family.

The sequence is that of Dysbindin domain-containing protein 1 (DBNDD1) from Homo sapiens (Human).